Reading from the N-terminus, the 219-residue chain is Triosephosphate isomerase (219 aa).

N6–K8 contributes to the substrate binding site. H90 (electrophile) is an active-site residue. Catalysis depends on E138, which acts as the Proton acceptor. Substrate-binding positions include I143, G178, and A199–S200.

Belongs to the triosephosphate isomerase family. In terms of assembly, homotetramer; dimer of dimers.

The protein localises to the cytoplasm. It catalyses the reaction D-glyceraldehyde 3-phosphate = dihydroxyacetone phosphate. The protein operates within carbohydrate biosynthesis; gluconeogenesis. It participates in carbohydrate degradation; glycolysis; D-glyceraldehyde 3-phosphate from glycerone phosphate: step 1/1. Functionally, involved in the gluconeogenesis. Catalyzes stereospecifically the conversion of dihydroxyacetone phosphate (DHAP) to D-glyceraldehyde-3-phosphate (G3P). The protein is Triosephosphate isomerase of Methanocaldococcus jannaschii (strain ATCC 43067 / DSM 2661 / JAL-1 / JCM 10045 / NBRC 100440) (Methanococcus jannaschii).